The chain runs to 333 residues: Autoinducer 2 import system permease protein LsrD (333 aa).

10 helical membrane passes run 7-27 (YGWE…FGIA), 45-65 (ICIG…GIDI), 70-90 (TIGL…PMAA), 91-111 (AIPL…ALIL), 118-138 (LVIT…LSGI), 162-182 (LFGL…CWLF), 212-232 (TLYL…IVLV), 240-260 (SDLG…GGAN), 261-281 (IYGG…IGYL), and 288-308 (AGVP…IAVV).

This sequence belongs to the binding-protein-dependent transport system permease family. AraH/RbsC subfamily. The complex is composed of two ATP-binding proteins (LsrA), two transmembrane proteins (LsrC and LsrD) and a solute-binding protein (LsrB).

Its subcellular location is the cell inner membrane. Functionally, part of the ABC transporter complex LsrABCD involved in autoinducer 2 (AI-2) import. Probably responsible for the translocation of the substrate across the membrane. The chain is Autoinducer 2 import system permease protein LsrD (lsrD) from Photorhabdus laumondii subsp. laumondii (strain DSM 15139 / CIP 105565 / TT01) (Photorhabdus luminescens subsp. laumondii).